Reading from the N-terminus, the 784-residue chain is E3 UFM1-protein ligase 1 homolog (784 aa).

Residues 401–481 are disordered; it reads QKGNSSAQDL…GGGGGGNKKT (81 aa).

This sequence belongs to the UFL1 family.

E3 UFM1-protein ligase that mediates ufmylation of target proteins. The polypeptide is E3 UFM1-protein ligase 1 homolog (Drosophila ananassae (Fruit fly)).